Here is a 74-residue protein sequence, read N- to C-terminus: VLIIAVLFLTACQLTTAETSSRGEQKHRAPRSTDKNSRMTKRCTPGGEACDATTNCCFLTCNLATNKCRSPNFP.

Residues 1–17 form the signal peptide; sequence VLIIAVLFLTACQLTTA. The interval 17–41 is disordered; that stretch reads AETSSRGEQKHRAPRSTDKNSRMTK. A propeptide spanning residues 18–40 is cleaved from the precursor; the sequence is ETSSRGEQKHRAPRSTDKNSRMT. The segment covering 21 to 37 has biased composition (basic and acidic residues); the sequence is SRGEQKHRAPRSTDKNS. Intrachain disulfides connect Cys-43-Cys-57, Cys-50-Cys-61, and Cys-56-Cys-68.

It belongs to the conotoxin O1 superfamily. As to expression, expressed by the venom duct.

It is found in the secreted. The chain is Conotoxin AbVIL from Conus abbreviatus (Abbreviated cone).